Here is a 624-residue protein sequence, read N- to C-terminus: tRNA uridine 5-carboxymethylaminomethyl modification enzyme MnmG (624 aa).

FAD contacts are provided by residues 16 to 21 (GAGHAG), V128, and S183. Residue 275 to 289 (GPRYCPSIEDKVVRF) coordinates NAD(+). Residue Q372 participates in FAD binding.

This sequence belongs to the MnmG family. Homodimer. Heterotetramer of two MnmE and two MnmG subunits. FAD serves as cofactor.

The protein localises to the cytoplasm. Its function is as follows. NAD-binding protein involved in the addition of a carboxymethylaminomethyl (cmnm) group at the wobble position (U34) of certain tRNAs, forming tRNA-cmnm(5)s(2)U34. This Geobacter metallireducens (strain ATCC 53774 / DSM 7210 / GS-15) protein is tRNA uridine 5-carboxymethylaminomethyl modification enzyme MnmG.